A 549-amino-acid polypeptide reads, in one-letter code: MARTLRPSPLCPGGGKAQLSSASLLGAGLLLQPPTPPPLLLLLFPLLLFSRLCGALAGPIIVEPHVTAVWGKNVSLKCLIEVNETITQISWEKIHGKSSQTVAVHHPQYGFSVQGEYQGRVLFKNYSLNDATITLHNIGFSDSGKYICKAVTFPLGNAQSSTTVTVLVEPTVSLIKGPDSLIDGGNETVAAICIAATGKPVAHIDWEGDLGEMESTTTSFPNETATIISQYKLFPTRFARGRRITCVVKHPALEKDIRYSFILDIQYAPEVSVTGYDGNWFVGRKGVNLKCNADANPPPFKSVWSRLDGQWPDGLLASDNTLHFVHPLTFNYSGVYICKVTNSLGQRSDQKVIYISDPPTTTTLQPTIQWHPSTADIEDLATEPKKLPFPLSTLATIKDDTIATIIASVVGGALFIVLVSVLAGIFCYRRRRTFRGDYFAKNYIPPSDMQKESQIDVLQQDELDSYPDSVKKENKNPVNNLIRKDYLEEPEKTQWNNVENLNRFERPMDYYEDLKMGMKFVSDEHYDENEDDLVSHVDGSVISRREWYV.

A signal peptide spans methionine 1–alanine 57. Topologically, residues glycine 58–threonine 404 are extracellular. An Ig-like V-type domain is found at proline 59–threonine 165. Residues asparagine 73, asparagine 83, asparagine 125, asparagine 186, asparagine 222, and asparagine 331 are each glycosylated (N-linked (GlcNAc...) asparagine). A disulfide bridge connects residues cysteine 78 and cysteine 148. 2 consecutive Ig-like C2-type domains span residues proline 170–arginine 258 and proline 269–tyrosine 354. Cystine bridges form between cysteine 193-cysteine 246 and cysteine 291-cysteine 338. Residues isoleucine 405–isoleucine 425 traverse the membrane as a helical segment. Topologically, residues phenylalanine 426–valine 549 are cytoplasmic.

This sequence belongs to the nectin family. As to quaternary structure, cis- and trans-homodimer. Can form trans-heterodimers with NECTIN1, NECTIN2, PVR, IGSF4B/Necl-1 and with IGSF4. Interaction between NECTIN1 and NECTIN3 on the pre- and postsynaptic sites, respectively, initiates the formation of puncta adherentia junctions between axons and dendrites. Interacts (via Cytoplasmic domain) with AFDN, providing a connection with the actin cytoskeleton. Binds with low affinity to TIGIT. (Microbial infection) Interacts with C.difficile toxin TcdB, suggesting that it may contribute to TcdB toxin entry into cells. It was however shown that NECTIN3/PVRL3 does not act as a major receptor for TcdB. As to expression, predominantly expressed in testis and placenta as well as in many cell lines, including epithelial cell lines.

Its subcellular location is the cell membrane. It localises to the postsynaptic cell membrane. The protein localises to the cell junction. It is found in the adherens junction. In terms of biological role, cell adhesion molecule that promotes cell-cell adhesion through heterophilic trans-interactions with nectins-like or other nectins, such as trans-interaction with NECTIN2 at Sertoli-spermatid junctions. Trans-interaction with PVR induces activation of CDC42 and RAC small G proteins through common signaling molecules such as SRC and RAP1. Induces endocytosis-mediated down-regulation of PVR from the cell surface, resulting in reduction of cell movement and proliferation. Involved in axon guidance by promoting contacts between the commissural axons and the floor plate cells. Also involved in the formation of cell-cell junctions, including adherens junctions and synapses. Promotes formation of checkerboard-like cellular pattern of hair cells and supporting cells in the auditory epithelium via heterophilic interaction with NECTIN1: NECTIN1 is present in the membrane of hair cells and associates with NECTIN3 on supporting cells, thereby mediating heterotypic adhesion between these two cell types. Plays a role in the morphology of the ciliary body. In Homo sapiens (Human), this protein is Nectin-3.